A 110-amino-acid chain; its full sequence is MIPGEYQLKSGDIELCVGRKSITINVANKGDRPVQVGSHYHFAESNPALSFDREQAYGYRLAIAAGLAIRFEPGQTREVSLIPYSGLRRLYGFRGEVMGPLDNKPKQESV.

It belongs to the urease beta subunit family. As to quaternary structure, heterotrimer of UreA (gamma), UreB (beta) and UreC (alpha) subunits. Three heterotrimers associate to form the active enzyme.

It localises to the cytoplasm. The enzyme catalyses urea + 2 H2O + H(+) = hydrogencarbonate + 2 NH4(+). The protein operates within nitrogen metabolism; urea degradation; CO(2) and NH(3) from urea (urease route): step 1/1. This is Urease subunit beta from Pseudoalteromonas translucida (strain TAC 125).